Reading from the N-terminus, the 147-residue chain is Putative pre-16S rRNA nuclease (147 aa).

The protein belongs to the YqgF nuclease family.

It localises to the cytoplasm. Its function is as follows. Could be a nuclease involved in processing of the 5'-end of pre-16S rRNA. The chain is Putative pre-16S rRNA nuclease from Latilactobacillus sakei subsp. sakei (strain 23K) (Lactobacillus sakei subsp. sakei).